Consider the following 167-residue polypeptide: MIYGDYNQPLQIHIDKMISVPDEKWVYGAFNLIIDGCFYPGKEINWTLNIIINWLKSFLDEDINAYDMKNCEEHSAEYLFREAVISRIGYYYDEPEEKISLEELKKIYPKKVGIEISLPEITDTGLELFFFREKEKDILVFYFQGTVSKIELDMGYIHKLIASLPDI.

This is an uncharacterized protein from Pasteurella multocida (strain Pm70).